A 200-amino-acid polypeptide reads, in one-letter code: Imidazole glycerol phosphate synthase subunit HisH (200 aa).

The Glutamine amidotransferase type-1 domain maps to 3–200; it reads EVALIDAGGA…LRNFLEMDAA (198 aa). Catalysis depends on C78, which acts as the Nucleophile. Residues H179 and E181 contribute to the active site.

In terms of assembly, heterodimer of HisH and HisF.

It localises to the cytoplasm. It catalyses the reaction 5-[(5-phospho-1-deoxy-D-ribulos-1-ylimino)methylamino]-1-(5-phospho-beta-D-ribosyl)imidazole-4-carboxamide + L-glutamine = D-erythro-1-(imidazol-4-yl)glycerol 3-phosphate + 5-amino-1-(5-phospho-beta-D-ribosyl)imidazole-4-carboxamide + L-glutamate + H(+). It carries out the reaction L-glutamine + H2O = L-glutamate + NH4(+). It functions in the pathway amino-acid biosynthesis; L-histidine biosynthesis; L-histidine from 5-phospho-alpha-D-ribose 1-diphosphate: step 5/9. In terms of biological role, IGPS catalyzes the conversion of PRFAR and glutamine to IGP, AICAR and glutamate. The HisH subunit catalyzes the hydrolysis of glutamine to glutamate and ammonia as part of the synthesis of IGP and AICAR. The resulting ammonia molecule is channeled to the active site of HisF. The polypeptide is Imidazole glycerol phosphate synthase subunit HisH (Xylella fastidiosa (strain Temecula1 / ATCC 700964)).